The sequence spans 70 residues: Putative defensin-like protein 280 (70 aa).

An N-terminal signal peptide occupies residues 1–23 (MASIKHFFLVFICVSVLLTSGLA). 3 disulfides stabilise this stretch: Cys30–Cys53, Cys39–Cys65, and Cys43–Cys67.

The protein belongs to the DEFL family.

The protein resides in the secreted. In Arabidopsis thaliana (Mouse-ear cress), this protein is Putative defensin-like protein 280.